The sequence spans 509 residues: Maturase K (509 aa).

This sequence belongs to the intron maturase 2 family. MatK subfamily.

It localises to the plastid. The protein localises to the chloroplast. In terms of biological role, usually encoded in the trnK tRNA gene intron. Probably assists in splicing its own and other chloroplast group II introns. The sequence is that of Maturase K from Schlumbergera truncata (Thanksgiving cactus).